The primary structure comprises 273 residues: Protein GMH1 (273 aa).

The segment at 1–33 (MSYLPTYSNDLPAGPQGQRRRNNGNENDARQGY) is disordered. The residue at position 2 (Ser2) is an N-acetylserine. Over 2–89 (SYLPTYSNDL…QTKNQWARDD (88 aa)) the chain is Cytoplasmic. The chain crosses the membrane as a helical span at residues 90–110 (PSFFIFQIALISLSSIIWSIY). The Lumenal segment spans residues 111 to 134 (NSGFNNDSDMGALSIIGHFFKSLV). Residues 135 to 155 (MMVILDFFIFGFIMATIFYLL) form a helical membrane-spanning segment. Residues 156-175 (LNRSHFKFKSSQNSVVEWAY) are Cytoplasmic-facing. Residues 176–196 (CFDVHCNSFLIILLCLYFIQF) form a helical membrane-spanning segment. Over 197-216 (LLLPIINLQNWISLLIGNSL) the chain is Lumenal. A helical transmembrane segment spans residues 217–237 (YCFAIGHYFILTFYGYNQLPF). At 238–242 (LKNLN) the chain is on the cytoplasmic side. Residues 243 to 263 (FILLPTLGLSIIYLISLFGID) traverse the membrane as a helical segment. Over 264-273 (LSKKLSFYNY) the chain is Lumenal.

It belongs to the unc-50 family. Interacts with GEA1 and GEA2.

It localises to the golgi apparatus membrane. The protein resides in the endoplasmic reticulum membrane. In Saccharomyces cerevisiae (strain ATCC 204508 / S288c) (Baker's yeast), this protein is Protein GMH1 (GMH1).